We begin with the raw amino-acid sequence, 1350 residues long: Probable serine/threonine-protein kinase DDB_G0278845 (1350 aa).

Disordered regions lie at residues 66-109, 121-159, 179-249, 270-296, 337-396, 431-506, 525-596, and 612-701; these read RELN…NNIR, ENGLLESPTSPIRTSSTPTTPTSPPFITSPPFITSPKGL, LANN…LNSI, SSINGNTTTTTTNTYSYNDNDNVNEYS, NNYN…RDDL, GSTI…EKKK, NDSN…IPTP, and NNNS…NTNE. Positions 84–98 are enriched in polar residues; it reads KYLTSSHSSVVIPQD. Low complexity-rich tracts occupy residues 127 to 140 and 181 to 210; these read SPTSPIRTSSTPTT and NNNNNNNNSNNSNNNSNSSNSNISCSNNSN. Positions 211–222 are enriched in polar residues; the sequence is KISRLINNSNTT. The span at 223–235 shows a compositional bias: low complexity; that stretch reads DSNASIRSSNNNN. Over residues 236-246 the composition is skewed to acidic residues; sequence DDFDNNDDEDL. Low complexity-rich tracts occupy residues 270–293 and 337–391; these read SSINGNTTTTTTNTYSYNDNDNVN and NNYN…GYNN. Positions 431-443 are enriched in polar residues; sequence GSTIFTSTSSDIA. The span at 454-482 shows a compositional bias: acidic residues; that stretch reads NENENENENENENENENDNDSDSENENEN. Composition is skewed to low complexity over residues 483-495 and 525-551; these read DNSIGNKSNKSNS and NDSNNNNNNNNSGNNNSFISNGSPFSP. Polar residues predominate over residues 565–592; the sequence is PKPTLQRQRSNSKNVLYSPNASPSNSCK. 3 stretches are compositionally biased toward low complexity: residues 612–637, 645–679, and 690–701; these read NNNSNNIENQNNNNNNIDNNIDNNID, NNNNNNNNNNNNNNNNNNNNNNNNNNNNNNNNNNN, and KKTPNNKINTNE. Residues 756 to 1082 form the Protein kinase domain; that stretch reads FTLIEKIGEG…VENIKNHIFF (327 aa). Residues 762–770 and K785 each bind ATP; that span reads IGEGGFGQV. D880 functions as the Proton acceptor in the catalytic mechanism. An AGC-kinase C-terminal domain is found at 1083 to 1203; the sequence is NGVPWGKLHD…PRADDQPLLW (121 aa). Disordered regions lie at residues 1129 to 1159, 1190 to 1219, 1232 to 1285, and 1300 to 1350; these read SLLPPPLPPPPQTPTQPQQPSLPPQTPNDKM, GFTYPRADDQPLLWNNNNNNNNNNNNNNNN, NNNN…NKTV, and NCNN…KQQQ. Residues 1131–1142 are compositionally biased toward pro residues; sequence LPPPLPPPPQTP. 3 stretches are compositionally biased toward low complexity: residues 1204 to 1219, 1232 to 1283, and 1300 to 1313; these read NNNNNNNNNNNNNNNN, NNNN…SNNK, and NCNNNNNNDENNIN. Composition is skewed to polar residues over residues 1314-1330 and 1338-1350; these read TGNLTPPNSSPFNSGEN and PTSPYGSYSKQQQ.

The protein belongs to the protein kinase superfamily. AGC Ser/Thr protein kinase family.

The enzyme catalyses L-seryl-[protein] + ATP = O-phospho-L-seryl-[protein] + ADP + H(+). It catalyses the reaction L-threonyl-[protein] + ATP = O-phospho-L-threonyl-[protein] + ADP + H(+). The protein is Probable serine/threonine-protein kinase DDB_G0278845 of Dictyostelium discoideum (Social amoeba).